Consider the following 4749-residue polypeptide: E3 ubiquitin-protein ligase MYCBP2 (4749 aa).

Disordered regions lie at residues 87-127, 170-192, and 609-628; these read DRDQ…RSKS, AASK…SREP, and ASKG…KPYK. A compositionally biased stretch (basic residues) spans 100–124; sequence SRNKKILNKKKLKRKQKSKSKVKTR. A phosphoserine mark is found at S127, S178, S181, and S183. RCC1 repeat units lie at residues 600 to 655, 699 to 755, 907 to 957, 958 to 1009, and 1011 to 1066; these read DGSV…VISK, NGEV…MMCP, KRDK…VLME, NGDV…LLMD, and QVFT…LRID. The segment covering 899 to 910 has biased composition (basic residues); that stretch reads SHPAQLKHKRDK. The interval 899–928 is disordered; the sequence is SHPAQLKHKRDKHKDGSGDRGEKDASKITT. The segment covering 911 to 924 has biased composition (basic and acidic residues); it reads HKDGSGDRGEKDAS. Positions 1235 to 1386 are PHR domain 1; that stretch reads NRFESHGGGW…GQIPQLLYRL (152 aa). Residue S1621 is modified to Phosphoserine. Residues 1723-1881 are PHR domain 2; that stretch reads NRFTKTSQGR…GQIPQILYYR (159 aa). C1745 and C1860 form a disulfide bridge. The segment at 2018-2544 is RAE1 binding; that stretch reads AVIESEHPYK…FNQHLGKSLL (527 aa). 2 disordered regions span residues 2313 to 2336 and 2780 to 3084; these read KKTS…SAAA and QQRQ…KGDG. One copy of the Filamin repeat lies at 2331 to 2438; the sequence is SPSAAASSAD…IDAGLEVKVK (108 aa). Residues 2780–2803 are compositionally biased toward polar residues; it reads QQRQLQSDRGTISTSSRPVSTSGK. Positions 2814–2832 are enriched in basic and acidic residues; that stretch reads VKPDGHVSRTPADQKKPRG. S2841 bears the Phosphoserine mark. A compositionally biased stretch (basic and acidic residues) spans 2847–2857; sequence DAAKLRSDSHS. Residues 2858 to 2879 show a composition bias toward polar residues; that stretch reads RSLSPNHNTLQTLKSDGRTSSG. Phosphoserine is present on residues S2859 and S2861. Composition is skewed to low complexity over residues 2884–2894 and 2904–2917; these read SPGPGSRSSSP and SSPS…SSSP. A phosphoserine mark is found at S2905 and S2911. Polar residues predominate over residues 2918–2929; the sequence is QDKNLPQKSTAP. Residues 2932–2943 are compositionally biased toward basic and acidic residues; that stretch reads TKLDPPRERSKS. A phosphoserine mark is found at S2941, S2943, and S2992. Positions 3008 to 3021 are enriched in polar residues; it reads CTSSTLKTNGVTDS. Basic and acidic residues-rich tracts occupy residues 3027–3037 and 3047–3056; these read GDLKSVDEGSN and PLKDEQEMRA. S3057 carries the post-translational modification Phosphoserine. Over residues 3060 to 3073 the composition is skewed to basic residues; sequence ISRKCANRHTRPKK. Phosphoserine occurs at positions 3162, 3550, and 3577. Residues 3677-3700 are disordered; it reads VEAEEDEDEDNKSNKENAEQEKDT. Positions 3687-3700 are enriched in basic and acidic residues; sequence NKSNKENAEQEKDT. Positions 3789-3967 constitute a DOC domain; sequence FSISVQSGFE…SVAQQRSCEA (179 aa). The interval 3986-4007 is disordered; it reads SGDAEPTPEQEEKALLSSPEGE. T3992 carries the post-translational modification Phosphothreonine. 2 positions are modified to phosphoserine: S4002 and S4003. 10 residues coordinate Zn(2+): C4499, C4502, C4517, H4519, H4522, C4525, C4546, C4549, C4615, and C4618. Residues 4499-4550 form an RING-type; atypical zinc finger; the sequence is CMICFTEALSAAPAIQLDCSHVFHLQCCRRVLENRWLGPRITFGFISCPICK. The segment at 4610-4747 is tandem cysteine domain; sequence YAYYVCYKCR…LGCGVCRNAH (138 aa). Residue C4629 is part of the active site. Zn(2+) is bound by residues C4646, C4649, C4658, H4661, C4670, C4673, and C4674. C4681 is a catalytic residue. Residues C4688, C4691, C4709, C4723, H4729, C4740, and C4743 each coordinate Zn(2+).

Belongs to the RING-Cys relay (RCR) family. In terms of assembly, interacts with MYC. Interacts with TSC2 (tuberin) when TSC2 is in complex with TSC1 (hamartin). Interacts with FBXO45. Interacts with RAE1. Interacts with CPNE1 (via VWFA domain) and CPNE4 (via VWFA domain). Interacts with (sumoylated) RANGAP1; interaction with sumoylated RANGAP1 inhibits E3 ubiquitin-protein ligase activity and promotes MYCBP2 translocation to the nucleus. Interacts with RAN. Interacts with ATP13A2; the interaction inhibits the ubiquitination of TSC2 by MYCBP2. Interacts with USP11. Autoubiquitinated. In terms of tissue distribution, expression is mostly restricted to the nervous system, including expression in motor and sensory axons. During postnatal development, expression is particularly strong in the cerebellum, hippocampus and retina. Lower levels of expression are observed throughout the cerebral cortex.

It is found in the nucleus. It localises to the cell projection. The protein localises to the axon. Its subcellular location is the cytoplasm. The protein resides in the cytoskeleton. It carries out the reaction [E2 ubiquitin-conjugating enzyme]-S-ubiquitinyl-L-cysteine + [acceptor protein]-L-threonine = [E2 ubiquitin-conjugating enzyme]-L-cysteine + [acceptor protein]-3-O-ubiquitinyl-L-threonine.. It participates in protein modification; protein ubiquitination. Its function is as follows. Atypical E3 ubiquitin-protein ligase which specifically mediates ubiquitination of threonine and serine residues on target proteins, instead of ubiquitinating lysine residues. Shows esterification activity towards both threonine and serine, with a preference for threonine, and acts via two essential catalytic cysteine residues that relay ubiquitin to its substrate via thioester intermediates. Interacts with the E2 enzymes UBE2D1, UBE2D3, UBE2E1 and UBE2L3. Plays a key role in neural development, probably by mediating ubiquitination of threonine residues on target proteins. Involved in different processes such as regulation of neurite outgrowth, synaptic growth, synaptogenesis and axon degeneration. Required for the formation of major central nervous system axon tracts. Required for proper axon growth by regulating axon navigation and axon branching: acts by regulating the subcellular location and stability of MAP3K12/DLK. Required for proper localization of retinogeniculate projections but not for eye-specific segregation. Regulates axon guidance in the olfactory system. Involved in Wallerian axon degeneration, an evolutionarily conserved process that drives the loss of damaged axons: acts by promoting destabilization of NMNAT2, probably via ubiquitination of NMNAT2. Catalyzes ubiquitination of threonine and/or serine residues on NMNAT2, consequences of threonine and/or serine ubiquitination are however unknown. Regulates the internalization of TRPV1 in peripheral sensory neurons. May mediate ubiquitination and subsequent proteasomal degradation of TSC2/tuberin. Independently of the E3 ubiquitin-protein ligase activity, also acts as a guanosine exchange factor (GEF) for RAN in neurons of dorsal root ganglia. May function as a facilitator or regulator of transcriptional activation by MYC. Acts in concert with HUWE1 to regulate the circadian clock gene expression by promoting the lithium-induced ubiquination and degradation of NR1D1. This is E3 ubiquitin-protein ligase MYCBP2 from Mus musculus (Mouse).